A 390-amino-acid polypeptide reads, in one-letter code: GTPase Obg (390 aa).

Residues 1 to 159 (MKFVDEAAIL…RELMLELLLL (159 aa)) form the Obg domain. An OBG-type G domain is found at 160–333 (ADVGMLGLPN…LCWDVMSFLN (174 aa)). GTP is bound by residues 166 to 173 (GLPNAGKS), 191 to 195 (FTTLI), 213 to 216 (DIPG), 283 to 286 (NKID), and 314 to 316 (SAA). Residues serine 173 and threonine 193 each contribute to the Mg(2+) site. Over residues 364–384 (VEAEAEDDWDDDWDEEDDDGV) the composition is skewed to acidic residues. The disordered stretch occupies residues 364 to 390 (VEAEAEDDWDDDWDEEDDDGVEIIYER).

This sequence belongs to the TRAFAC class OBG-HflX-like GTPase superfamily. OBG GTPase family. In terms of assembly, monomer. The cofactor is Mg(2+).

It localises to the cytoplasm. An essential GTPase which binds GTP, GDP and possibly (p)ppGpp with moderate affinity, with high nucleotide exchange rates and a fairly low GTP hydrolysis rate. Plays a role in control of the cell cycle, stress response, ribosome biogenesis and in those bacteria that undergo differentiation, in morphogenesis control. The sequence is that of GTPase Obg from Yersinia pestis.